The following is a 302-amino-acid chain: Hydra actinoporin-like toxin 4 (302 aa).

A signal peptide spans 1–17 (MLLFKLIVCFFFIFAIG). The disordered stretch occupies residues 22-93 (KKDETSGENE…PAPKQTTTKK (72 aa)). Residues 60-75 (KPPAAKPPAASKITKP) show a composition bias toward low complexity. Pro residues predominate over residues 76 to 86 (QVPPQKKPPAP). The Cell attachment site motif lies at 274–276 (KAG).

It belongs to the actinoporin family. HALT subfamily. In terms of assembly, octamer or nonamer in membranes. Monomer in the soluble state. In vitro, interacts with folate receptor alpha (of target organism).

The protein resides in the nematocyst. It is found in the secreted. The protein localises to the target cell membrane. Pore-forming protein that forms hydrophilic pores and causes cytolysis. Compared to equinatoxin-2 (AC P61914), it reveals lower cytolysis activity (5-12-fold difference, tested on erythrocytes), a larger pore size (probably 2-3 nm) and different affinity to membrane lipids (100-fold lower affinity to sphingomyelin). Binds to sulfatides. Shows cytolytic activity on HeLa cells, with a different potency than its paralogs (from most potent to less potent: HALT-4&gt;HALT-6~HALT-1&gt;HALT-3&gt;HALT-7&gt;HALT-2). This recombinant protein has the highest cytolytic activity compared to other rHALT proteins, probably due to its longer N-terminal sequence that may penetrate the lipid bilayer more effectively. Pore formation is a multi-step process that involves specific recognition of membrane lipid by a protein aromatic residues rich region, firm binding to the membrane (mainly driven by hydrophobic interactions) accompanied by the transfer of the N-terminal region to the lipid-water interface and finally pore formation after oligomerization of monomers. In vitro, binds to the folate receptor alpha (FOLR1), a GPI-anchored membrane protein that plays a major role in the uptake of folate/folic acid into cells via endocytosis, suggesting a possible involvement of this receptor in the mechanism of HALT-1-induced cell lysis. In vivo, does not cause visible paralysis in larvae of the blowfly Sarcophaga faculata, the most common arthropod prey of Hydra. The chain is Hydra actinoporin-like toxin 4 from Hydra vulgaris (Hydra).